Here is a 401-residue protein sequence, read N- to C-terminus: Methyltransferase cfoC (401 aa).

S-adenosyl-L-methionine is bound at residue aspartate 268. Histidine 308 functions as the Proton acceptor in the catalytic mechanism.

This sequence belongs to the class I-like SAM-binding methyltransferase superfamily. Cation-independent O-methyltransferase family.

It functions in the pathway secondary metabolite biosynthesis; flavonoid biosynthesis. Functionally, methyltransferase; part of the gene cluster that mediates the biosynthesis of chlorflavonin, a fungal flavonoid with acetolactate synthase inhibitory activity. Within the pathway, cfoC is responsible for the methylation at position C8-OH of flavonoid. The pathway begins with the PKS-NRPS hybrid synthetase cfoA that uses benzoic acid or p-hydroxybenzoic acid as a starter unit with four rounds of chain elongation using malonyl-CoA to form the chalcone skeleton. Then, a new type of chalcone isomerase, cfoK, catalyzes the conversion of the chalcone into a flavanone by a histidine-mediated oxa-Michael addition mechanism. The desaturation of flavanone to flavone is catalyzed by a new type of flavone synthase, the flavin mononucleotide (FMN)-dependent oxidoreductase cfoJ. Monooxygenases cfoF, cfoG, and P450 cfoH are responsible for the hydroxylation of the flavonoid skeleton at sites C3, C8, and C2', respectively. Like cfoF, the dehydratase cfoI also plays a role in the hydroxylation of position C3. Methyltransferases cfoB, cfoC, and cfoD then catalyze the methylation of C7-OH, C8-OH, and C3-OH, respectively. Finally, the monooxygenase cfoE is responsible for the chlorination of flavonoid at position C3'. This chain is Methyltransferase cfoC, found in Aspergillus candidus.